A 630-amino-acid polypeptide reads, in one-letter code: Transposase B from transposon Tn554 (630 aa).

One can recognise a Core-binding (CB) domain in the interval 216–302 (TYFKQLVKRY…ILEGLFSTLL (87 aa)). The Tyr recombinase domain occupies 326 to 513 (AKPRFIDEFV…FDETLKNEFT (188 aa)). Residues Arg-363, Lys-391, His-465, Arg-468, and His-491 contribute to the active site. Catalysis depends on Tyr-500, which acts as the O-(3'-phospho-DNA)-tyrosine intermediate.

The protein belongs to the 'phage' integrase family.

Its function is as follows. One of three proteins encoded by transposon Tn554 required for its transposition. The chain is Transposase B from transposon Tn554 (tnpB1) from Staphylococcus aureus (strain Mu50 / ATCC 700699).